The following is a 527-amino-acid chain: AAA ATPase forming ring-shaped complexes (527 aa).

The segment covering 1-18 (MVTMSSPTDSSPSNSFSD) has biased composition (low complexity). The disordered stretch occupies residues 1–38 (MVTMSSPTDSSPSNSFSDFNREEQSRLSDEVRQLKRTN). Basic and acidic residues predominate over residues 19 to 33 (FNREEQSRLSDEVRQ). Residues 21–53 (REEQSRLSDEVRQLKRTNSDLGARNAKLAEMLK) adopt a coiled-coil conformation. 257 to 262 (GCGKTL) is a binding site for ATP. The tract at residues 492–515 (DENQQSEDLPNTSNPDEWSRITGR) is disordered. A compositionally biased stretch (polar residues) spans 497–507 (SEDLPNTSNPD).

It belongs to the AAA ATPase family. As to quaternary structure, homohexamer. Assembles into a hexameric ring structure.

The chain is AAA ATPase forming ring-shaped complexes from Corynebacterium glutamicum (strain R).